The chain runs to 152 residues: Ribonuclease pancreatic beta-type (152 aa).

A signal peptide spans 1–25; that stretch reads MGLEKSFILFSLLVLVLGWVQPSLG. Basic and acidic residues predominate over residues 31-45; the sequence is SSADKFKRQHMDPES. The segment at 31–53 is disordered; that stretch reads SSADKFKRQHMDPESPSKSSPTY. Positions 35 and 38 each coordinate substrate. Residue histidine 40 is the Proton acceptor of the active site. Intrachain disulfides connect cysteine 54-cysteine 112, cysteine 68-cysteine 123, cysteine 86-cysteine 138, and cysteine 93-cysteine 100. Residues 69 to 73, lysine 94, and arginine 113 each bind substrate; that span reads KPVNT. The Proton donor role is filled by histidine 147.

Belongs to the pancreatic ribonuclease family. As to quaternary structure, monomer.

The protein localises to the secreted. It carries out the reaction an [RNA] containing cytidine + H2O = an [RNA]-3'-cytidine-3'-phosphate + a 5'-hydroxy-ribonucleotide-3'-[RNA].. The enzyme catalyses an [RNA] containing uridine + H2O = an [RNA]-3'-uridine-3'-phosphate + a 5'-hydroxy-ribonucleotide-3'-[RNA].. Its function is as follows. Endonuclease that catalyzes the cleavage of RNA on the 3' side of pyrimidine nucleotides. Acts on single-stranded and double-stranded RNA. The protein is Ribonuclease pancreatic beta-type of Rattus exulans (Polynesian rat).